Consider the following 167-residue polypeptide: SsrA-binding protein (167 aa).

A compositionally biased stretch (basic and acidic residues) spans 139–158 (QNHDKRDAAKDRDWQRDKQR). Positions 139–167 (QNHDKRDAAKDRDWQRDKQRVMRRHNRDA) are disordered.

Belongs to the SmpB family.

The protein resides in the cytoplasm. In terms of biological role, required for rescue of stalled ribosomes mediated by trans-translation. Binds to transfer-messenger RNA (tmRNA), required for stable association of tmRNA with ribosomes. tmRNA and SmpB together mimic tRNA shape, replacing the anticodon stem-loop with SmpB. tmRNA is encoded by the ssrA gene; the 2 termini fold to resemble tRNA(Ala) and it encodes a 'tag peptide', a short internal open reading frame. During trans-translation Ala-aminoacylated tmRNA acts like a tRNA, entering the A-site of stalled ribosomes, displacing the stalled mRNA. The ribosome then switches to translate the ORF on the tmRNA; the nascent peptide is terminated with the 'tag peptide' encoded by the tmRNA and targeted for degradation. The ribosome is freed to recommence translation, which seems to be the essential function of trans-translation. This is SsrA-binding protein from Xanthomonas axonopodis pv. citri (strain 306).